The primary structure comprises 533 residues: Homeobox protein DTH-1 (533 aa).

Disordered stretches follow at residues 1 to 28 (MSSN…NECP) and 308 to 378 (LPQN…GKKR). A compositionally biased stretch (basic and acidic residues) spans 8 to 19 (VKYDTNFDREGY). A compositionally biased stretch (low complexity) spans 308–317 (LPQNLPNPNQ). Polar residues predominate over residues 318–333 (TDSIYSSSINENNQPI). Residues 360–371 (SVENNDNENSSS) show a composition bias toward low complexity. The homeobox DNA-binding region spans 377–436 (KRKRRVLFSKKQILELERHFRQKKYLSAPEREHLANLIGLSPTQVKIWFQNHRYKMKRAH).

This sequence belongs to the NK-2 homeobox family. As to expression, intestine and unidentified peripheral parenchymal cells. Slightly higher levels in the cephalic region compared to other body regions.

It localises to the nucleus. In terms of biological role, this protein might be involved in determination and/or differentiation of nerve cells in the continuous replacement of neurons in the cephalic region. The chain is Homeobox protein DTH-1 (DTH-1) from Girardia tigrina (Planarian).